The primary structure comprises 308 residues: Transcription initiation factor IIB (308 aa).

2 tandem repeats follow at residues Asn-124 to Leu-207 and Asp-218 to Gln-299.

Belongs to the TFIIB family.

Functionally, stabilizes TBP binding to an archaeal box-A promoter. Also responsible for recruiting RNA polymerase II to the pre-initiation complex (DNA-TBP-TFIIB). The protein is Transcription initiation factor IIB of Sulfurisphaera tokodaii (strain DSM 16993 / JCM 10545 / NBRC 100140 / 7) (Sulfolobus tokodaii).